We begin with the raw amino-acid sequence, 933 residues long: MTELKAKGPRAPHVAGGPPSPEVGSPLLCRPAAGPFPGSQTSDTLPEVSAIPISLDGLLFPRPCQGQDPSNEKTQDQQSLSDVEGAYSRAEATRGAGGSSSSPPEKDSGLLDSVLDTLLAPSGPGQSQPSPPACEVTSSWCLFGPELPEDPPAAPATQGVLSPLMSRSGCKAGDSSGTAAAHKVLPRGLSPSRQLLLPASGSPHWSGAPVKPSPQPAAVEVEEEDGSESEESAGPLLKGKPRALGGAAAGGGAAAVPPGAAAGGVALVPKEDSRFSAPRVALVEQDAPMAPGRSPLATTMMDFIHVPILPLNHALLAARTRQLLEDESYDGGAGAASAFAPPRSSPSASSTPVAVGDFPDCAYPPDAEPKDDAYPLYSDFQPPALKIKEEEEGAEASARSPRSYLVAGANPAAFPDFPLGPPPPLPPRAPPSRPGEAAVTAAPASASVSSASSSGSTLECILYKAEGAPPQQGPFAPPPCKAPGASGCLLPRDGLPSTSASAAAAGAAPALYPALGLSGLPQLGYQATVLKEGLPQVYPPYLNYLRPDSEASQSPQYSFESLPQKICLICGDEASGCHYGVLTCGSCKVFFKRAMEGQHNYLCAGRNDCIVDKIRRKNCPACRLRKCCQAGMVLGGRKFKKFNKVRVVRALDAVALPQPVGIPNESQALSQRFSFSPGQDIQLIPPLINLLMSIEPDVIYAGHDNTKPDTSSSLLTSLNQLGERQLLSVVKWSKSLPGFRNLHIDDQITLIQYSWMSLMVFGLGWRSYKHVSGQMLYFAPDLILNEQRMKESSFYSLCLTMWQIPQEFVKLQVSQEEFLCMKVLLLLNTIPLEGLRSQTQFEEMRSSYIRELIKAIGLRQKGVVSSSQRFYQLTKLLDNLHDLVKQLHLYCLNTFIQSRALSVEFPEMMSEVIAAQLPKILAGMVKPLLFHKK.

The tract at residues 1–164 (MTELKAKGPR…PATQGVLSPL (164 aa)) is AF3; mediates transcriptional activation. The tract at residues 1-256 (MTELKAKGPR…AAAGGGAAAV (256 aa)) is disordered. The tract at residues 1-566 (MTELKAKGPR…YSFESLPQKI (566 aa)) is modulating, Pro-Rich. The residue at position 20 (S20) is a Phosphoserine. The LXXL motif 1 motif lies at 55 to 59 (LDGLL). The residue at position 81 (S81) is a Phosphoserine. An LXXL motif 2 motif is present at residues 115–119 (LDTLL). Phosphoserine is present on residues S130 and S162. The interval 165–305 (MSRSGCKAGD…LATTMMDFIH (141 aa)) is mediates transcriptional transrepression. A Nuclear localization signal motif is present at residues 183 to 187 (KVLPR). 2 positions are modified to phosphoserine: S190 and S213. Acidic residues predominate over residues 220 to 231 (EVEEEDGSESEE). The segment covering 232–246 (SAGPLLKGKPRALGG) has biased composition (low complexity). Position 294 is a phosphoserine; by MAPK1 (S294). The segment at 331–378 (GGAGAASAFAPPRSSPSASSTPVAVGDFPDCAYPPDAEPKDDAYPLYS) is disordered. Positions 335–350 (AASAFAPPRSSPSASS) are enriched in low complexity. S345 is modified (phosphoserine; by MAPK). K388 is covalently cross-linked (Glycyl lysine isopeptide (Lys-Gly) (interchain with G-Cter in SUMO); alternate). K388 is covalently cross-linked (Glycyl lysine isopeptide (Lys-Gly) (interchain with G-Cter in ubiquitin); alternate). Residue S400 is modified to Phosphoserine; by CDK2. Residues 415–452 (PDFPLGPPPPLPPRAPPSRPGEAAVTAAPASASVSSAS) are disordered. The segment covering 418–433 (PLGPPPPLPPRAPPSR) has biased composition (pro residues). Residues 434 to 452 (PGEAAVTAAPASASVSSAS) show a composition bias toward low complexity. The tract at residues 456–546 (STLECILYKA…VYPPYLNYLR (91 aa)) is AF1; mediates transcriptional activation. A Glycyl lysine isopeptide (Lys-Gly) (interchain with G-Cter in SUMO) cross-link involves residue K531. NR C4-type zinc fingers lie at residues 567–587 (CLIC…CGSC) and 603–627 (CAGR…LRKC). Residues 567-639 (CLICGDEASG…AGMVLGGRKF (73 aa)) constitute a DNA-binding region (nuclear receptor). Phosphoserine is present on S676. Residues 679-913 (QDIQLIPPLI…EFPEMMSEVI (235 aa)) form the NR LBD domain. Residues 687-933 (LINLLMSIEP…MVKPLLFHKK (247 aa)) form an AF2; mediates transcriptional activation region. R766 contacts progesterone.

Belongs to the nuclear hormone receptor family. In terms of assembly, interacts with SMARD1 and UNC45A. Interacts with CUEDC2; the interaction promotes ubiquitination, decreases sumoylation, and represses transcriptional activity. Interacts with PIAS3; the interaction promotes sumoylation of PR in a hormone-dependent manner, inhibits DNA-binding, and alters nuclear export. Interacts with SP1; the interaction requires ligand-induced phosphorylation on Ser-345 by ERK1/2-MAPK. Interacts with PRMT2. Interacts with NCOA2 and NCOA1. Interacts with KLF9. Interacts with GTF2B. Phosphorylated on multiple serine sites. Several of these sites are hormone-dependent. Phosphorylation on Ser-294 is highly hormone-dependent and modulates ubiquitination and sumoylation on Lys-388. Phosphorylation on Ser-102 and Ser-345 also requires induction by hormone. Basal phosphorylation on Ser-81, Ser-162, Ser-190 and Ser-400 is increased in response to progesterone and can be phosphorylated in vitro by the CDK2-A1 complex. Increased levels of phosphorylation on Ser-400 also in the presence of EGF, heregulin, IGF, PMA and FBS. Phosphorylation at this site by CDK2 is ligand-independent, and increases nuclear translocation and transcriptional activity. Phosphorylation at Ser-162 and Ser-294, but not at Ser-190, is impaired during the G(2)/M phase of the cell cycle. Phosphorylation on Ser-345 by ERK1/2 MAPK is required for interaction with SP1. Post-translationally, sumoylation is hormone-dependent and represses transcriptional activity. Sumoylation on all three sites is enhanced by PIAS3. Desumoylated by SENP1. Sumoylation on Lys-388, the main site of sumoylation, is repressed by ubiquitination on the same site, and modulated by phosphorylation at Ser-294. In terms of processing, ubiquitination is hormone-dependent and represses sumoylation on the same site. Promoted by MAPK-mediated phosphorylation on Ser-294. Ubiquitinated by UBR5, leading to its degradation: UBR5 specifically recognizes and binds ligand-bound PGR when it is not associated with coactivators (NCOAs). In presence of NCOAs, the UBR5-degron is not accessible, preventing its ubiquitination and degradation. Palmitoylated by ZDHHC7 and ZDHHC21. Palmitoylation is required for plasma membrane targeting and for rapid intracellular signaling via ERK and AKT kinases and cAMP generation.

Its subcellular location is the nucleus. The protein localises to the cytoplasm. The steroid hormones and their receptors are involved in the regulation of eukaryotic gene expression and affect cellular proliferation and differentiation in target tissues. Transcriptional activator of several progesteron-dependent promoters in a variety of cell types. Involved in activation of SRC-dependent MAPK signaling on hormone stimulation. This Pan paniscus (Pygmy chimpanzee) protein is Progesterone receptor (PGR).